Here is a 308-residue protein sequence, read N- to C-terminus: Extended-spectrum beta-lactamase PER-1 (308 aa).

A signal peptide spans 1–26 (MNVIIKAVVTASTLLMVSFSSFETSA). Ser71 acts as the Nucleophile; acyl-ester intermediate in catalysis. Residues Lys74, Ser135, and Glu171 each coordinate a beta-lactam.

It belongs to the class-A beta-lactamase family. In terms of assembly, monomer.

It localises to the secreted. It carries out the reaction a beta-lactam + H2O = a substituted beta-amino acid. Its activity is regulated as follows. Inhibited by the beta-lactamase-blocking agents clavulanic acid, tazobactam and sulbactam. Not inhibited by EDTA. Its function is as follows. Extended-spectrum beta-lactamase (ESBL) which confers resistance to penicillins, as well as first-, second- and third-generation cephalosporins, but not the carbapenem, imipenem, in the JM109 strain of E.coli. Has cefotaxime-hydrolyzing activity. The polypeptide is Extended-spectrum beta-lactamase PER-1 (Pseudomonas aeruginosa).